Consider the following 210-residue polypeptide: Inner membrane-spanning protein YciB (210 aa).

A run of 6 helical transmembrane segments spans residues 12–32 (EVSP…FFFA), 53–73 (IFIA…ASWI), 78–98 (LPMM…LTLW), 115–135 (LFGA…GYVF), 148–168 (KLTI…EVIW), and 175–195 (FWVA…TLAQ).

It belongs to the YciB family.

It is found in the cell inner membrane. Its function is as follows. Plays a role in cell envelope biogenesis, maintenance of cell envelope integrity and membrane homeostasis. The polypeptide is Inner membrane-spanning protein YciB (Rhizobium meliloti (strain 1021) (Ensifer meliloti)).